We begin with the raw amino-acid sequence, 252 residues long: Imidazole glycerol phosphate synthase subunit HisF (252 aa).

Catalysis depends on residues Asp11 and Asp130.

The protein belongs to the HisA/HisF family. Heterodimer of HisH and HisF.

The protein localises to the cytoplasm. It carries out the reaction 5-[(5-phospho-1-deoxy-D-ribulos-1-ylimino)methylamino]-1-(5-phospho-beta-D-ribosyl)imidazole-4-carboxamide + L-glutamine = D-erythro-1-(imidazol-4-yl)glycerol 3-phosphate + 5-amino-1-(5-phospho-beta-D-ribosyl)imidazole-4-carboxamide + L-glutamate + H(+). It participates in amino-acid biosynthesis; L-histidine biosynthesis; L-histidine from 5-phospho-alpha-D-ribose 1-diphosphate: step 5/9. IGPS catalyzes the conversion of PRFAR and glutamine to IGP, AICAR and glutamate. The HisF subunit catalyzes the cyclization activity that produces IGP and AICAR from PRFAR using the ammonia provided by the HisH subunit. This chain is Imidazole glycerol phosphate synthase subunit HisF, found in Bacillus anthracis (strain CDC 684 / NRRL 3495).